Reading from the N-terminus, the 346-residue chain is Histidinol-phosphate aminotransferase (346 aa).

Lys-209 carries the post-translational modification N6-(pyridoxal phosphate)lysine.

Belongs to the class-II pyridoxal-phosphate-dependent aminotransferase family. Histidinol-phosphate aminotransferase subfamily. As to quaternary structure, homodimer. Requires pyridoxal 5'-phosphate as cofactor.

It catalyses the reaction L-histidinol phosphate + 2-oxoglutarate = 3-(imidazol-4-yl)-2-oxopropyl phosphate + L-glutamate. The protein operates within amino-acid biosynthesis; L-histidine biosynthesis; L-histidine from 5-phospho-alpha-D-ribose 1-diphosphate: step 7/9. This Vibrio vulnificus (strain YJ016) protein is Histidinol-phosphate aminotransferase.